The following is a 338-amino-acid chain: Homoserine kinase (338 aa).

Belongs to the GHMP kinase family. Homoserine kinase subfamily.

It catalyses the reaction L-homoserine + ATP = O-phospho-L-homoserine + ADP + H(+). It participates in amino-acid biosynthesis; L-threonine biosynthesis; L-threonine from L-aspartate: step 4/5. Commits homoserine to the threonine biosynthesis pathway by catalyzing its O-phosphorylation. The sequence is that of Homoserine kinase from Schizosaccharomyces pombe (strain 972 / ATCC 24843) (Fission yeast).